The sequence spans 309 residues: UDP-N-acetylenolpyruvoylglucosamine reductase (309 aa).

The FAD-binding PCMH-type domain maps to 34–199; that stretch reads RVGGPAQVLF…TSARLRGTPA (166 aa). Residue Arg-179 is part of the active site. The Proton donor role is filled by Ser-228. Residue Glu-298 is part of the active site.

The protein belongs to the MurB family. It depends on FAD as a cofactor.

Its subcellular location is the cytoplasm. It carries out the reaction UDP-N-acetyl-alpha-D-muramate + NADP(+) = UDP-N-acetyl-3-O-(1-carboxyvinyl)-alpha-D-glucosamine + NADPH + H(+). It participates in cell wall biogenesis; peptidoglycan biosynthesis. Cell wall formation. In Rhodopseudomonas palustris (strain ATCC BAA-98 / CGA009), this protein is UDP-N-acetylenolpyruvoylglucosamine reductase.